Here is a 163-residue protein sequence, read N- to C-terminus: Lipoprotein signal peptidase (163 aa).

The next 3 membrane-spanning stretches (helical) occupy residues Phe8–Met28, Phe61–Trp81, and Phe93–Tyr113. Active-site residues include Asp117 and Asp136. A helical transmembrane segment spans residues Tyr128–Ile148.

Belongs to the peptidase A8 family.

It localises to the cell inner membrane. The catalysed reaction is Release of signal peptides from bacterial membrane prolipoproteins. Hydrolyzes -Xaa-Yaa-Zaa-|-(S,diacylglyceryl)Cys-, in which Xaa is hydrophobic (preferably Leu), and Yaa (Ala or Ser) and Zaa (Gly or Ala) have small, neutral side chains.. It functions in the pathway protein modification; lipoprotein biosynthesis (signal peptide cleavage). This protein specifically catalyzes the removal of signal peptides from prolipoproteins. This is Lipoprotein signal peptidase from Bartonella henselae (strain ATCC 49882 / DSM 28221 / CCUG 30454 / Houston 1) (Rochalimaea henselae).